The chain runs to 518 residues: GMP synthase [glutamine-hydrolyzing] (518 aa).

A Glutamine amidotransferase type-1 domain is found at 13–203 (KIIVLDFGSQ…ALNVCGCKGD (191 aa)). C90 functions as the Nucleophile in the catalytic mechanism. Active-site residues include H177 and E179. Positions 204–393 (WTMENFSEVE…LGMPDAIVWR (190 aa)) constitute a GMPS ATP-PPase domain. Position 231 to 237 (231 to 237 (SGGVDSS)) interacts with ATP.

As to quaternary structure, homodimer.

The catalysed reaction is XMP + L-glutamine + ATP + H2O = GMP + L-glutamate + AMP + diphosphate + 2 H(+). Its pathway is purine metabolism; GMP biosynthesis; GMP from XMP (L-Gln route): step 1/1. Functionally, catalyzes the synthesis of GMP from XMP. This is GMP synthase [glutamine-hydrolyzing] from Listeria welshimeri serovar 6b (strain ATCC 35897 / DSM 20650 / CCUG 15529 / CIP 8149 / NCTC 11857 / SLCC 5334 / V8).